The following is a 184-amino-acid chain: Ribosome maturation factor RimM (184 aa).

The PRC barrel domain occupies 104-184 (SEDEFYWREL…RIEVDWDPGF (81 aa)).

The protein belongs to the RimM family. As to quaternary structure, binds ribosomal protein uS19.

The protein resides in the cytoplasm. Its function is as follows. An accessory protein needed during the final step in the assembly of 30S ribosomal subunit, possibly for assembly of the head region. Essential for efficient processing of 16S rRNA. May be needed both before and after RbfA during the maturation of 16S rRNA. It has affinity for free ribosomal 30S subunits but not for 70S ribosomes. This Vibrio atlanticus (strain LGP32) (Vibrio splendidus (strain Mel32)) protein is Ribosome maturation factor RimM.